The sequence spans 204 residues: Inactive ribonuclease-like protein 9 (204 aa).

The signal sequence occupies residues 1 to 26 (MMRTLITIHPLPLLLLLQQLLQPVQF). 3 cysteine pairs are disulfide-bonded: Cys97/Cys152, Cys115/Cys167, and Cys122/Cys129. N-linked (GlcNAc...) asparagine glycosylation is found at Asn130 and Asn142.

Belongs to the pancreatic ribonuclease family.

It localises to the secreted. Does not exhibit any ribonuclease activity. The sequence is that of Inactive ribonuclease-like protein 9 (RNASE9) from Pongo pygmaeus (Bornean orangutan).